Reading from the N-terminus, the 895-residue chain is Glutamate receptor 2.3 (895 aa).

An N-terminal signal peptide occupies residues 1-23; it reads MRTEKLFFCILLVFFFCLEFNRG. The Extracellular segment spans residues 24-582; sequence QNNGKTLVDV…ILFMKPLSWK (559 aa). 7 N-linked (GlcNAc...) asparagine glycosylation sites follow: Asn-52, Asn-203, Asn-266, Asn-330, Asn-342, Asn-477, and Asn-542. The chain crosses the membrane as a helical span at residues 583–603; sequence LWLTSFISFFLVGCTVWVLEY. Over 604 to 610 the chain is Cytoplasmic; the sequence is KRNPDFS. A helical membrane pass occupies residues 611 to 631; the sequence is GPPRFQASTICWFAFSTMVFA. Residues 632–635 lie on the Cytoplasmic side of the membrane; it reads PRER. Residues 636-656 traverse the membrane as a helical segment; sequence VFSFWARALVIAWYFLVLVLT. Residues 657 to 830 are Extracellular-facing; it reads QSYTASLASL…FTSRQLDIDS (174 aa). The helical transmembrane segment at 831 to 851 threads the bilayer; sequence FLFLFVGVLLVCVMALGNFTY. Over 852 to 895 the chain is Cytoplasmic; sequence CFLAKDQVSYLDKVEMSPCSSSQQMPVKRKTQLNMSQVHDQDSL. The tract at residues 873 to 895 is disordered; it reads SQQMPVKRKTQLNMSQVHDQDSL.

Belongs to the glutamate-gated ion channel (TC 1.A.10.1) family. As to quaternary structure, may form heteromers. As to expression, expressed predominantly in roots.

It is found in the membrane. Its function is as follows. Glutamate-gated receptor that probably acts as a non-selective cation channel. May be involved in light-signal transduction and calcium homeostasis via the regulation of calcium influx into cells. The polypeptide is Glutamate receptor 2.3 (GLR2.3) (Arabidopsis thaliana (Mouse-ear cress)).